Reading from the N-terminus, the 259-residue chain is Indole-3-glycerol phosphate synthase (259 aa).

Belongs to the TrpC family.

It carries out the reaction 1-(2-carboxyphenylamino)-1-deoxy-D-ribulose 5-phosphate + H(+) = (1S,2R)-1-C-(indol-3-yl)glycerol 3-phosphate + CO2 + H2O. The protein operates within amino-acid biosynthesis; L-tryptophan biosynthesis; L-tryptophan from chorismate: step 4/5. This chain is Indole-3-glycerol phosphate synthase, found in Dehalococcoides mccartyi (strain ATCC BAA-2100 / JCM 16839 / KCTC 5957 / BAV1).